The sequence spans 498 residues: ATP synthase subunit beta, chloroplastic (498 aa).

172-179 contacts ATP; that stretch reads GGAGVGKT.

This sequence belongs to the ATPase alpha/beta chains family. In terms of assembly, F-type ATPases have 2 components, CF(1) - the catalytic core - and CF(0) - the membrane proton channel. CF(1) has five subunits: alpha(3), beta(3), gamma(1), delta(1), epsilon(1). CF(0) has four main subunits: a(1), b(1), b'(1) and c(9-12).

Its subcellular location is the plastid. The protein resides in the chloroplast thylakoid membrane. It carries out the reaction ATP + H2O + 4 H(+)(in) = ADP + phosphate + 5 H(+)(out). Functionally, produces ATP from ADP in the presence of a proton gradient across the membrane. The catalytic sites are hosted primarily by the beta subunits. The protein is ATP synthase subunit beta, chloroplastic of Salacca zalacca (Snake palm).